We begin with the raw amino-acid sequence, 438 residues long: Glycerophosphocholine cholinephosphodiesterase ENPP6 (438 aa).

An N-terminal signal peptide occupies residues 1 to 22 (MTRTLLKIYTLFILLLCRQRDA). D32, S69, and N90 together coordinate substrate. Zn(2+) is bound by residues D32 and S69. Residue S69 is the Nucleophile of the active site. S69 carries the phosphoserine modification. C140 and C152 are oxidised to a cystine. Residues 162-226 (KNLTDSMENA…ILNQKIREKN (65 aa)) adopt a coiled-coil conformation. The N-linked (GlcNAc...) asparagine glycan is linked to N163. D191 is a substrate binding site. Residues D191, H195, D238, and H239 each contribute to the Zn(2+) site. H239 is a substrate binding site. N258, N287, and N339 each carry an N-linked (GlcNAc...) asparagine glycan. A substrate-binding site is contributed by H352. Position 352 (H352) interacts with Zn(2+). An N-linked (GlcNAc...) asparagine glycan is attached at N402. S415 carries GPI-anchor amidated serine lipidation. A propeptide spans 416–438 (AATAGASLISCCFLLLLTLTGVC) (removed in mature form).

The protein belongs to the nucleotide pyrophosphatase/phosphodiesterase family. The cofactor is Zn(2+).

It is found in the cell membrane. It catalyses the reaction sn-glycerol 3-phosphocholine + H2O = phosphocholine + glycerol + H(+). The enzyme catalyses a 1-acyl-sn-glycero-3-phosphocholine + H2O = a 1-acyl-sn-glycerol + phosphocholine + H(+). The catalysed reaction is a 1-O-alkyl-sn-glycero-3-phosphocholine + H2O = a 1-O-alkyl-sn-glycerol + phosphocholine + H(+). It carries out the reaction 1-dodecanoyl-sn-glycero-3-phosphocholine + H2O = 1-dodecanoyl-sn-glycerol + phosphocholine + H(+). It catalyses the reaction 1-hexadecanoyl-sn-glycero-3-phosphocholine + H2O = 1-hexadecanoyl-sn-glycerol + phosphocholine + H(+). The enzyme catalyses 1-(5Z,8Z,11Z,14Z-eicosatetraenoyl)-sn-glycero-3-phosphocholine + H2O = 1-(5Z,8Z,11Z,14Z-eicosatetraenoyl)-sn-glycerol + phosphocholine + H(+). The catalysed reaction is 1-tetradecanoyl-sn-glycero-3-phosphocholine + H2O = 1-tetradecanoyl-sn-glycerol + phosphocholine + H(+). It carries out the reaction sphing-4-enine-phosphocholine + H2O = sphing-4-enine + phosphocholine + H(+). It catalyses the reaction 1-(9Z-octadecenoyl)-sn-glycero-3-phosphocholine + H2O = 1-(9Z-octadecenoyl)-sn-glycerol + phosphocholine + H(+). The enzyme catalyses 1-(9Z,12Z)-octadecadienoyl-sn-glycero-3-phosphocholine + H2O = 1-(9Z,12Z-octadecadienoyl)-sn-glycerol + phosphocholine + H(+). The catalysed reaction is glycero-2-phosphocholine + H2O = phosphocholine + glycerol + H(+). Its function is as follows. Choline-specific glycerophosphodiesterase that hydrolyzes glycerophosphocholine (GPC) and lysophosphatidylcholine (LPC) and contributes to supplying choline to the cells. Has a preference for LPC with short (12:0 and 14:0) or polyunsaturated (18:2 and 20:4) fatty acids. In vitro, hydrolyzes only choline-containing lysophospholipids, such as sphingosylphosphorylcholine (SPC), platelet-activating factor (PAF) and lysoPAF, but not other lysophospholipids. This is Glycerophosphocholine cholinephosphodiesterase ENPP6 from Danio rerio (Zebrafish).